Reading from the N-terminus, the 514-residue chain is Flagellin B (514 aa).

It belongs to the bacterial flagellin family. In terms of assembly, heteromer of FlaA and FlaB. FlaB is located proximal to the hook while the remainder of the filament is composed of the predominant FlaA.

The protein resides in the secreted. The protein localises to the bacterial flagellum. Flagellin is the subunit protein which polymerizes to form the filaments of bacterial flagella. Important for motility and virulence. The sequence is that of Flagellin B (flaB) from Helicobacter pylori (strain ATCC 700392 / 26695) (Campylobacter pylori).